We begin with the raw amino-acid sequence, 428 residues long: 3-phosphoshikimate 1-carboxyvinyltransferase (428 aa).

The 3-phosphoshikimate site is built by Lys-23, Ser-24, and Arg-28. Lys-23 contacts phosphoenolpyruvate. 2 residues coordinate phosphoenolpyruvate: Gly-97 and Arg-125. Residues Ser-170, Ser-171, Gln-172, Ser-198, Asp-314, Asn-337, and Lys-341 each coordinate 3-phosphoshikimate. Gln-172 serves as a coordination point for phosphoenolpyruvate. Asp-314 serves as the catalytic Proton acceptor. The phosphoenolpyruvate site is built by Arg-345, Arg-387, and Lys-412.

Belongs to the EPSP synthase family. As to quaternary structure, monomer.

The protein localises to the cytoplasm. It carries out the reaction 3-phosphoshikimate + phosphoenolpyruvate = 5-O-(1-carboxyvinyl)-3-phosphoshikimate + phosphate. Its pathway is metabolic intermediate biosynthesis; chorismate biosynthesis; chorismate from D-erythrose 4-phosphate and phosphoenolpyruvate: step 6/7. Its function is as follows. Catalyzes the transfer of the enolpyruvyl moiety of phosphoenolpyruvate (PEP) to the 5-hydroxyl of shikimate-3-phosphate (S3P) to produce enolpyruvyl shikimate-3-phosphate and inorganic phosphate. In Edwardsiella ictaluri (strain 93-146), this protein is 3-phosphoshikimate 1-carboxyvinyltransferase.